The primary structure comprises 76 residues: Acyl carrier protein (76 aa).

Positions 1–76 constitute a Carrier domain; sequence MSVEEKVKKI…DAIDYVSNKQ (76 aa). Ser36 carries the O-(pantetheine 4'-phosphoryl)serine modification.

Belongs to the acyl carrier protein (ACP) family. In terms of processing, 4'-phosphopantetheine is transferred from CoA to a specific serine of apo-ACP by AcpS. This modification is essential for activity because fatty acids are bound in thioester linkage to the sulfhydryl of the prosthetic group.

The protein resides in the cytoplasm. The protein operates within lipid metabolism; fatty acid biosynthesis. In terms of biological role, carrier of the growing fatty acid chain in fatty acid biosynthesis. This Nitratidesulfovibrio vulgaris (strain ATCC 29579 / DSM 644 / CCUG 34227 / NCIMB 8303 / VKM B-1760 / Hildenborough) (Desulfovibrio vulgaris) protein is Acyl carrier protein.